Reading from the N-terminus, the 513-residue chain is L-threonine dehydratase biosynthetic IlvA (513 aa).

Lysine 61 is subject to N6-(pyridoxal phosphate)lysine. Pyridoxal 5'-phosphate is bound by residues asparagine 88, 187–191 (GGGGL), and serine 314. 2 ACT-like domains span residues 338–409 (ALLA…DLSN) and 432–504 (RLYS…DVTE).

It belongs to the serine/threonine dehydratase family. In terms of assembly, homotetramer. Requires pyridoxal 5'-phosphate as cofactor.

It catalyses the reaction L-threonine = 2-oxobutanoate + NH4(+). It participates in amino-acid biosynthesis; L-isoleucine biosynthesis; 2-oxobutanoate from L-threonine: step 1/1. Functionally, catalyzes the anaerobic formation of alpha-ketobutyrate and ammonia from threonine in a two-step reaction. The first step involved a dehydration of threonine and a production of enamine intermediates (aminocrotonate), which tautomerizes to its imine form (iminobutyrate). Both intermediates are unstable and short-lived. The second step is the nonenzymatic hydrolysis of the enamine/imine intermediates to form 2-ketobutyrate and free ammonia. In the low water environment of the cell, the second step is accelerated by RidA. This is L-threonine dehydratase biosynthetic IlvA (ilvA) from Pasteurella multocida (strain Pm70).